The sequence spans 579 residues: Laccase (579 aa).

Positions 1–31 (MTDWSRRRFLQTGAALGIAGTLPQTTTEVSA) form a signal peptide, tat-type signal. The Plastocyanin-like 1 domain occupies 82 to 214 (WGFDGSYPGP…AGLLGLYSIT (133 aa)). Histidine 145, histidine 147, histidine 192, and histidine 194 together coordinate Cu cation. Positions 372-401 (VSDPSTPPEDASADPTSLSLPTPASYDESD) are disordered. A Plastocyanin-like 2 domain is found at 423–530 (LNGHVFGDED…NKMMIPFVVE (108 aa)). Residue asparagine 449 is glycosylated (N-linked (GlcNAc...) asparagine). Histidine 455, histidine 458, histidine 460, histidine 512, cysteine 513, histidine 514, histidine 518, and methionine 523 together coordinate Cu cation. A glycan (N-linked (GlcNAc...) asparagine) is linked at asparagine 557.

Belongs to the multicopper oxidase family. Requires Cu(2+) as cofactor. In terms of processing, exported by the Tat system. Glycosylated.

Its subcellular location is the secreted. The catalysed reaction is 4 hydroquinone + O2 = 4 benzosemiquinone + 2 H2O. With respect to regulation, inhibited by 1 mM NaN(3), 10 mM thiourea, 10 mM 1,10-phenanthroline, 0.1 mM DL-dithiothreitol (DTT) and 1 mM L-cysteine. The inhibition by DTT and L-cysteine is likely caused by reduction of the oxidized substrate and not by inhibition of the enzyme. Catalyzes the oxidation of a wide variety of organic substrates, including bilirubin, syringaldazine (SGZ), 2,2'-azino-di-(3-ethylbenzothiazoline)-6-sulfonic acid (ABTS) and dimethoxyphenol (DMP). No oxidation of Fe(2+) or guaiacol. In Haloferax volcanii (strain ATCC 29605 / DSM 3757 / JCM 8879 / NBRC 14742 / NCIMB 2012 / VKM B-1768 / DS2) (Halobacterium volcanii), this protein is Laccase (lccA).